A 532-amino-acid polypeptide reads, in one-letter code: Cytochrome P450 714B2 (532 aa).

Topologically, residues 1–2 (ME) are lumenal. The chain crosses the membrane as a helical; Signal-anchor for type III membrane protein span at residues 3–23 (VGMVVVVAAKVLVSLWCVGAC). Residues 24–532 (CLAAYLYRVV…LTRVQGAYRH (509 aa)) lie on the Cytoplasmic side of the membrane. A heme-binding site is contributed by C474.

It belongs to the cytochrome P450 family. Requires heme as cofactor. In terms of tissue distribution, highly expressed in shoot, spikelet and uppermost internode. Detected in roots, leaves and anthers.

It is found in the membrane. Functionally, catalyzes the 13-hydroxylation of gibberellins (GAs). Determines the ratio of GA4 and GA1. Converts GA12 into GA53. This chain is Cytochrome P450 714B2 (CYP714B2), found in Oryza sativa subsp. japonica (Rice).